The primary structure comprises 513 residues: Bifunctional purine biosynthesis protein PurH (513 aa).

One can recognise an MGS-like domain in the interval 1–147; that stretch reads MIQIKRALVS…KNHKNVVVLT (147 aa).

This sequence belongs to the PurH family.

The enzyme catalyses (6R)-10-formyltetrahydrofolate + 5-amino-1-(5-phospho-beta-D-ribosyl)imidazole-4-carboxamide = 5-formamido-1-(5-phospho-D-ribosyl)imidazole-4-carboxamide + (6S)-5,6,7,8-tetrahydrofolate. The catalysed reaction is IMP + H2O = 5-formamido-1-(5-phospho-D-ribosyl)imidazole-4-carboxamide. It participates in purine metabolism; IMP biosynthesis via de novo pathway; 5-formamido-1-(5-phospho-D-ribosyl)imidazole-4-carboxamide from 5-amino-1-(5-phospho-D-ribosyl)imidazole-4-carboxamide (10-formyl THF route): step 1/1. It functions in the pathway purine metabolism; IMP biosynthesis via de novo pathway; IMP from 5-formamido-1-(5-phospho-D-ribosyl)imidazole-4-carboxamide: step 1/1. This is Bifunctional purine biosynthesis protein PurH from Leptospira biflexa serovar Patoc (strain Patoc 1 / Ames).